Here is a 948-residue protein sequence, read N- to C-terminus: Isoleucine--tRNA ligase (948 aa).

The 'HIGH' region motif lies at 58 to 68 (PYANGDIHIGH). Residue Glu566 participates in L-isoleucyl-5'-AMP binding. Positions 607 to 611 (KMSKS) match the 'KMSKS' region motif. Lys610 lines the ATP pocket. Zn(2+)-binding residues include Cys911, Cys914, Cys931, and Cys934.

The protein belongs to the class-I aminoacyl-tRNA synthetase family. IleS type 1 subfamily. Monomer. It depends on Zn(2+) as a cofactor.

The protein resides in the cytoplasm. It carries out the reaction tRNA(Ile) + L-isoleucine + ATP = L-isoleucyl-tRNA(Ile) + AMP + diphosphate. Its function is as follows. Catalyzes the attachment of isoleucine to tRNA(Ile). As IleRS can inadvertently accommodate and process structurally similar amino acids such as valine, to avoid such errors it has two additional distinct tRNA(Ile)-dependent editing activities. One activity is designated as 'pretransfer' editing and involves the hydrolysis of activated Val-AMP. The other activity is designated 'posttransfer' editing and involves deacylation of mischarged Val-tRNA(Ile). In Vibrio vulnificus (strain CMCP6), this protein is Isoleucine--tRNA ligase.